A 434-amino-acid polypeptide reads, in one-letter code: ATP phosphoribosyltransferase regulatory subunit (434 aa).

Residues 1–48 (MYGRGSGAEHSRGSGAEHFWDPRPEASSTVSSSLRPPSGARDLLPREV) are disordered. Positions 27-38 (SSTVSSSLRPPS) are enriched in low complexity.

It belongs to the class-II aminoacyl-tRNA synthetase family. HisZ subfamily. As to quaternary structure, heteromultimer composed of HisG and HisZ subunits.

It is found in the cytoplasm. Its pathway is amino-acid biosynthesis; L-histidine biosynthesis; L-histidine from 5-phospho-alpha-D-ribose 1-diphosphate: step 1/9. Functionally, required for the first step of histidine biosynthesis. May allow the feedback regulation of ATP phosphoribosyltransferase activity by histidine. The protein is ATP phosphoribosyltransferase regulatory subunit of Synechococcus sp. (strain JA-2-3B'a(2-13)) (Cyanobacteria bacterium Yellowstone B-Prime).